The chain runs to 201 residues: MARYTGPVTRKSRRLRTDLVGGDQAFEKRPYPPGQHGRARIKESEYLLQLQEKQKARFTYGVMEKQFRRYYEEAVRQPGKTGEELLKILESRLDNVIYRAGLARTRRMARQLVSHGHFNVNGVHVNVPSYRVSQYDIVDVRDKSLNTVPFQIARETAGERPIPSWLQVVGERQRVLIHQLPERAQIDVPLTEQLIVEYYSK.

Residues 91-157 (SRLDNVIYRA…VPFQIARETA (67 aa)) form the S4 RNA-binding domain.

This sequence belongs to the universal ribosomal protein uS4 family. In terms of assembly, part of the 30S ribosomal subunit. Contacts protein S5. The interaction surface between S4 and S5 is involved in control of translational fidelity.

One of the primary rRNA binding proteins, it binds directly to 16S rRNA where it nucleates assembly of the body of the 30S subunit. In terms of biological role, with S5 and S12 plays an important role in translational accuracy. This is Small ribosomal subunit protein uS4 from Mycobacterium tuberculosis (strain ATCC 25177 / H37Ra).